A 246-amino-acid polypeptide reads, in one-letter code: 2,5-diamino-6-ribosylamino-4(3H)-pyrimidinone 5'-phosphate reductase (246 aa).

NADP(+)-binding positions include T78, D82, L163, and 186–190; that span reads GAEVL.

This sequence belongs to the HTP reductase family. As to quaternary structure, homodimer.

It catalyses the reaction 2,5-diamino-6-(1-D-ribitylamino)pyrimidin-4(3H)-one 5'-phosphate + NADP(+) = 2,5-diamino-6-(1-D-ribosylamino)pyrimidin-4(3H)-one 5'-phosphate + NADPH + H(+). The enzyme catalyses 2,5-diamino-6-(1-D-ribitylamino)pyrimidin-4(3H)-one 5'-phosphate + NAD(+) = 2,5-diamino-6-(1-D-ribosylamino)pyrimidin-4(3H)-one 5'-phosphate + NADH + H(+). It functions in the pathway cofactor biosynthesis; riboflavin biosynthesis. In terms of biological role, catalyzes an early step in riboflavin biosynthesis, the NADPH-dependent reduction of the ribose side chain of 2,5-diamino-6-ribosylamino-4(3H)-pyrimidinone 5'-phosphate, yielding 2,5-diamino-6-ribitylamino-4(3H)-pyrimidinone 5'-phosphate. This chain is 2,5-diamino-6-ribosylamino-4(3H)-pyrimidinone 5'-phosphate reductase (RIB7), found in Eremothecium gossypii (strain ATCC 10895 / CBS 109.51 / FGSC 9923 / NRRL Y-1056) (Yeast).